The chain runs to 330 residues: Cathepsin S (330 aa).

The signal sequence occupies residues 1-17; sequence MKQLVCVLFVCSSAVTQ. The propeptide at 18-114 is activation peptide; the sequence is LHKDPTLDHH…ITYKSNPNQM (97 aa). N-linked (GlcNAc...) asparagine glycosylation is present at Asn-104. Disulfide bonds link Cys-126/Cys-223, Cys-136/Cys-179, Cys-170/Cys-212, and Cys-271/Cys-319. Residue Cys-139 is part of the active site. Catalysis depends on residues His-277 and Asn-297.

This sequence belongs to the peptidase C1 family.

It localises to the lysosome. Its subcellular location is the secreted. The protein localises to the cytoplasmic vesicle. It is found in the phagosome. The catalysed reaction is Similar to cathepsin L, but with much less activity on Z-Phe-Arg-|-NHMec, and more activity on the Z-Val-Val-Arg-|-Xaa compound.. Its function is as follows. Thiol protease. Key protease responsible for the removal of the invariant chain from MHC class II molecules and MHC class II antigen presentation. The bond-specificity of this proteinase is in part similar to the specificities of cathepsin L. The chain is Cathepsin S (CTSS) from Saimiri boliviensis boliviensis (Bolivian squirrel monkey).